A 757-amino-acid polypeptide reads, in one-letter code: Xaa-Pro dipeptidyl-peptidase (757 aa).

Catalysis depends on charge relay system residues Ser-348, Asp-468, and His-498.

This sequence belongs to the peptidase S15 family. In terms of assembly, homodimer.

It is found in the cytoplasm. It catalyses the reaction Hydrolyzes Xaa-Pro-|- bonds to release unblocked, N-terminal dipeptides from substrates including Ala-Pro-|-p-nitroanilide and (sequentially) Tyr-Pro-|-Phe-Pro-|-Gly-Pro-|-Ile.. In terms of biological role, removes N-terminal dipeptides sequentially from polypeptides having unsubstituted N-termini provided that the penultimate residue is proline. The polypeptide is Xaa-Pro dipeptidyl-peptidase (Streptococcus pneumoniae serotype 19F (strain G54)).